Reading from the N-terminus, the 179-residue chain is DELTA-actitoxin-Afr1a (179 aa).

The N-terminal alpha-helix that contributes to the pore stretch occupies residues Ser1 to Val29. Arg31 serves as a coordination point for an N-(acyl)-sphingosylphosphocholine. The N-acetyl-D-glucosamine 6-sulfate site is built by Tyr51 and Arg53. An N-(acyl)-sphingosylphosphocholine is bound by residues Arg53, Ser54, Arg79, Gly85, Tyr108, Tyr113, Ser114, Trp116, Tyr133, Tyr137, Tyr138, Arg144, and Gly168. The segment at Ser105–Arg120 is trp-rich region, which is important for the binding to lipid membrane. Residue Tyr138 coordinates N-acetyl-D-glucosamine 6-sulfate. The short motif at Arg144 to Asp146 is the Cell attachment site, crucial for protein stability element.

It belongs to the actinoporin family. Sea anemone subfamily. In terms of assembly, octamer or nonamer in membranes. Monomer in the soluble state.

The protein resides in the secreted. Its subcellular location is the nematocyst. The protein localises to the target cell membrane. Functionally, pore-forming toxin (PFT) that consists of a crown-shaped octamer or nonamer that forms cation-selective hydrophilic pores of about 1.5 nm (inside) and 13 nm (outside). It causes cardiac stimulation and cytolysis (EC(50)=1.6 nM on erythrocytes). Interestingly, the Phe-16 is crucial for hemolysis. Pore formation is a multi-step process that involves specific recognition of membrane sphingomyelin (but neither cholesterol nor phosphatidylcholine) using aromatic rich region and adjacent phosphocholine (POC) binding site, firm binding to the membrane (mainly driven by hydrophobic interactions) accompanied by the transfer of the N-terminal region to the lipid-water interface and finally pore formation after oligomerization of monomers. It is probable that a dimeric form is an assembly intermediate before the complete oligomerization. The formation of stable pores occurs only in vesicles composed of DOPC/SM (there is no oligomerization when the PFT is treated with vesicles of DOPC or SM alone). The transmembrane pore displays 8 lateral perforations, one at each subunit-subunit interface, partially occupied by the acyl-chain region of a bridging lipid. Each pore contains 24 lipid molecules, firmly bound to each subunit, that is, 3 lipids (L1, L2, L3, L4 and/or L5) are associated to each subunit. Lipid L1 bridges 2 subunits, whereas lipids L2 and L3 bind to sites at single subunit. This is DELTA-actitoxin-Afr1a from Actinia fragacea (Strawberry anemone).